Consider the following 260-residue polypeptide: MRRTGRSYKPLLSQLKDHHIPVHPSSRAERAMESRTLLVLLFVGVVTIVSSGLERAAAQDDTDDGILPSSDVQPLVSNMIGQGFTVAAAVAQSLQTLIPIRSTLLIPSNNAIAGVDANLSQEDIINTLQYHVLTFPTSFEALSRNDVGAELPTMLQGEMITVTSNSPGNFTLNEVNITHPDVCSSTRFIACHGIDRVLAYNSSLVTAAGPEASPPFGAEQASPAPEALPPGTRSPNNTANPSNRKSNSTRSSASRYPVSE.

Residues 1–35 (MRRTGRSYKPLLSQLKDHHIPVHPSSRAERAMESR) are Cytoplasmic-facing. A helical membrane pass occupies residues 36–58 (TLLVLLFVGVVTIVSSGLERAAA). One can recognise an FAS1 domain in the interval 59–198 (QDDTDDGILP…IACHGIDRVL (140 aa)). The Extracellular segment spans residues 59 to 260 (QDDTDDGILP…SSASRYPVSE (202 aa)). Residues N118, N169, N176, N201, N236, and N247 are each glycosylated (N-linked (GlcNAc...) asparagine). The disordered stretch occupies residues 210–260 (PEASPPFGAEQASPAPEALPPGTRSPNNTANPSNRKSNSTRSSASRYPVSE). Over residues 233–254 (RSPNNTANPSNRKSNSTRSSAS) the composition is skewed to polar residues.

It localises to the membrane. This Selaginella moellendorffii (Spikemoss) protein is FAS1 domain-containing protein SELMODRAFT_448915.